Reading from the N-terminus, the 162-residue chain is Ribosomal RNA large subunit methyltransferase H (162 aa).

Gly108 contributes to the S-adenosyl-L-methionine binding site.

Belongs to the RNA methyltransferase RlmH family. As to quaternary structure, homodimer.

The protein localises to the cytoplasm. The catalysed reaction is pseudouridine(1915) in 23S rRNA + S-adenosyl-L-methionine = N(3)-methylpseudouridine(1915) in 23S rRNA + S-adenosyl-L-homocysteine + H(+). Functionally, specifically methylates the pseudouridine at position 1915 (m3Psi1915) in 23S rRNA. The sequence is that of Ribosomal RNA large subunit methyltransferase H from Methylobacterium nodulans (strain LMG 21967 / CNCM I-2342 / ORS 2060).